Reading from the N-terminus, the 411-residue chain is uncharacterized protein (411 aa).

Positions 20–199 (FLYFDFDAFF…LPITEIPGIG (180 aa)) constitute a UmuC domain.

This sequence belongs to the DNA polymerase type-Y family.

This is an uncharacterized protein from Mycoplasma genitalium (strain ATCC 33530 / DSM 19775 / NCTC 10195 / G37) (Mycoplasmoides genitalium).